Here is a 29-residue protein sequence, read N- to C-terminus: Sarcolamban B (29 aa).

Residues 7–27 (LFTTFLILAFLLFLLYAFYEA) traverse the membrane as a helical segment.

As to quaternary structure, interacts with SERCA. In terms of tissue distribution, strongly expressed in embryonic and larval somatic muscles and postembryonic heart.

Its subcellular location is the sarcoplasmic reticulum membrane. Functionally, plays an essential role in the regulation of calcium transport at the sarcoplasmic reticulum (SR), which is secondarily required for regular muscle contraction. The chain is Sarcolamban B from Drosophila melanogaster (Fruit fly).